The primary structure comprises 546 residues: Glucose-6-phosphate isomerase (546 aa).

Glu-353 acts as the Proton donor in catalysis. Catalysis depends on residues His-384 and Lys-512.

It belongs to the GPI family.

The protein localises to the cytoplasm. The enzyme catalyses alpha-D-glucose 6-phosphate = beta-D-fructose 6-phosphate. The protein operates within carbohydrate biosynthesis; gluconeogenesis. Its pathway is carbohydrate degradation; glycolysis; D-glyceraldehyde 3-phosphate and glycerone phosphate from D-glucose: step 2/4. In terms of biological role, catalyzes the reversible isomerization of glucose-6-phosphate to fructose-6-phosphate. The chain is Glucose-6-phosphate isomerase from Actinobacillus pleuropneumoniae serotype 5b (strain L20).